We begin with the raw amino-acid sequence, 610 residues long: 6(G)-fructosyltransferase (610 aa).

The Cytoplasmic portion of the chain corresponds to M1–R20. The helical; Signal-anchor for type II membrane protein transmembrane segment at F21–S38 threads the bilayer. Residues S39 to N610 are Vacuolar-facing. Substrate is bound by residues Y79–D82, Q98, W106, W141–T142, and R207–D208. Residue D82 is part of the active site. 3 N-linked (GlcNAc...) asparagine glycosylation sites follow: N215, N229, and N248. E266 serves as a coordination point for substrate. Residue N459 is glycosylated (N-linked (GlcNAc...) asparagine). C460 and C508 form a disulfide bridge. N-linked (GlcNAc...) asparagine glycosylation is found at N580 and N597.

Belongs to the glycosyl hydrolase 32 family. In terms of processing, might be processed in two N-terminal and C-terminal proteolytic fragments.

The protein localises to the vacuole membrane. It catalyses the reaction [1-beta-D-fructofuranosyl-(2-&gt;1)-]m+1 alpha-D-glucopyranoside + [1-beta-D-fructofuranosyl-(2-&gt;1)-]n+1 alpha-D-glucopyranoside = [1-beta-D-fructofuranosyl-(2-&gt;1)-]m alpha-D-glucopyranoside + [1-beta-D-fructofuranosyl-(2-&gt;1)-]n+1 beta-D-fructofuranosyl-(2-&gt;6)-alpha-D-glucopyranoside (m &gt; 0, n &gt;= 0).. Involved in the synthesis of fructan of the inulin neoseries. Has no 1-FFT activity. This chain is 6(G)-fructosyltransferase (FT1), found in Asparagus officinalis (Garden asparagus).